A 428-amino-acid chain; its full sequence is MARVVRIFKTLRNHWKKSTVGFCLLAYGSHWLYGKHCDNLLRRAACEEAQVFGNHQILPHSAIKKATVFLNPAACKGKARTLFEKNAAPVLHLAGIDITVVKTDYEGQAKKLLELMEKTDLIIVAGGDGTVQEVITGLLRRDDEASFSKIPIGFIPLGGTNTLSHTLYPERENKVEQITEATLSILKGETVPLDVLQIKGEQDQPVFAVQGIRWGSYRDASVKVSKYWYLGPLKARAAHLFSALKEWPQQHQASISYLGPAERPPEEPEQKPSRPPLYVRIYRRLALYWSPPKVEVPVEPTPEPWEEAQLSAVELSITTQNHQPDLLRTLDSMSIHIEPDTISKGKFIQLGAQKMTDPLLHPEDSQVLLASRCSLHLPQGTEGHFSIDSEEYEAMSVDVTLLPRKLHFLCHPTRKQELLQSPTATAQS.

Positions 18–34 (STVGFCLLAYGSHWLYG) are hydrophobic. Residues 61–202 (SAIKKATVFL…LDVLQIKGEQ (142 aa)) form the DAGKc domain.

The protein belongs to the AGK family. As to quaternary structure, component of the TIM22 complex. Mg(2+) serves as cofactor.

It localises to the mitochondrion inner membrane. The protein resides in the mitochondrion intermembrane space. It catalyses the reaction a monoacylglycerol + ATP = a monoacyl-sn-glycero-3-phosphate + ADP + H(+). The enzyme catalyses a 1,2-diacyl-sn-glycerol + ATP = a 1,2-diacyl-sn-glycero-3-phosphate + ADP + H(+). It carries out the reaction an N-acylsphing-4-enine + ATP = an N-acylsphing-4-enine 1-phosphate + ADP + H(+). The catalysed reaction is 1-(9Z-octadecenoyl)-sn-glycerol + ATP = 1-(9Z-octadecenoyl)-sn-glycero-3-phosphate + ADP + H(+). It catalyses the reaction 1,2-di-(9Z-octadecenoyl)-sn-glycerol + ATP = 1,2-di-(9Z-octadecenoyl)-sn-glycero-3-phosphate + ADP + H(+). The enzyme catalyses a 1-acyl-sn-glycerol + ATP = a 1-acyl-sn-glycero-3-phosphate + ADP + H(+). It carries out the reaction 1-hexadecanoyl-sn-glycerol + ATP = 1-hexadecanoyl-sn-glycero-3-phosphate + ADP + H(+). The catalysed reaction is a 2-acylglycerol + ATP = a 2-acyl-sn-glycerol 3-phosphate + ADP + H(+). It catalyses the reaction 2-(5Z,8Z,11Z,14Z-eicosatetraenoyl)-glycerol + ATP = 2-(5Z,8Z,11Z,14Z-eicosatetraenoyl)-sn-glycero-3-phosphate + ADP + H(+). The enzyme catalyses 1-(5Z,8Z,11Z,14Z-eicosatetraenoyl)-sn-glycerol + ATP = 1-(5Z,8Z,11Z,14Z-eicosatetraenoyl)-sn-glycero-3-phosphate + ADP + H(+). It carries out the reaction N-(hexanoyl)sphing-4-enine + ATP = N-hexanoylsphing-4-enine 1-phosphate + ADP + H(+). The protein operates within lipid metabolism; glycerolipid metabolism. Its function is as follows. Lipid kinase that can phosphorylate both monoacylglycerol and diacylglycerol to form lysophosphatidic acid (LPA) and phosphatidic acid (PA), respectively. Phosphorylates ceramide but not sphingosine. Phosphorylates 1,2-dioleoylglycerol more rapidly than 2,3-dioleoylglycerol. Independently of its lipid kinase activity, acts as a component of the TIM22 complex. The TIM22 complex mediates the import and insertion of multi-pass transmembrane proteins into the mitochondrial inner membrane by forming a twin-pore translocase that uses the membrane potential as the external driving force. The protein is Acylglycerol kinase, mitochondrial of Xenopus laevis (African clawed frog).